A 353-amino-acid polypeptide reads, in one-letter code: UPF0283 membrane protein YcjF (353 aa).

The next 3 membrane-spanning stretches (helical) occupy residues 70 to 90, 100 to 120, and 213 to 233; these read MVMG…VQWT, VALG…GSVV, and ESTL…FIAW.

The protein belongs to the UPF0283 family.

It is found in the cell inner membrane. The chain is UPF0283 membrane protein YcjF from Shigella sonnei (strain Ss046).